The chain runs to 537 residues: MSGQAASYYNPSQSYGDFQPGMQNPQQQPDYYNNNVSNHGYDLNFQRGPEPKPPTEPPPTYNQAVYGFDDAFKIERPKYHDIWAGLLFIAVFLGYVAVSGVAIHRYAKYKGLNGDGIYDSSNSFSLDTNTLILFIFVLCVALAFSYAYFLGARYFSKLFIWVTGILNIVFALATGIYYIARKQYGGGIVFLLFGVFAIICFISWIPRIPFSAFMLQTSIDVSRKYGHMFIVSTIGGLVAVAFAAWFSVTLVSIYVAYEPSSSGSNPSCSDGGCSRARVIGLVVYVTFAMYWFSEWLKNTIHTTIAGVYGSWYFWSQSPNGMPRGSTRGAFRRATTYSFGSVSFGSLIIAIINMLRQACSVAQRNEAAEGSIVGSIMFWILGCFIAILDWLVTLFNRYAFCHIALYGKAYIPAAKDTWTMMRDRGIDALVNDCLIGPVLTMGSVFVSYVCALLAYLYLQFTKPSYNADGNFTAVIMAFAFVIGLQICQIFMTPVSSGIETIFVAMGWDPQVMIRDHPDLYYRMIQVYPRVQQAIQPSA.

The segment covering 1–16 (MSGQAASYYNPSQSYG) has biased composition (polar residues). Residues 1–35 (MSGQAASYYNPSQSYGDFQPGMQNPQQQPDYYNNN) form a disordered region. Over 1–81 (MSGQAASYYN…FKIERPKYHD (81 aa)) the chain is Cytoplasmic. Positions 23–35 (QNPQQQPDYYNNN) are enriched in low complexity. Residues 82 to 102 (IWAGLLFIAVFLGYVAVSGVA) traverse the membrane as a helical segment. The Extracellular portion of the chain corresponds to 103-130 (IHRYAKYKGLNGDGIYDSSNSFSLDTNT). Residues 131–151 (LILFIFVLCVALAFSYAYFLG) traverse the membrane as a helical segment. Over 152–158 (ARYFSKL) the chain is Cytoplasmic. A helical transmembrane segment spans residues 159-179 (FIWVTGILNIVFALATGIYYI). Topologically, residues 180 to 184 (ARKQY) are extracellular. A helical transmembrane segment spans residues 185 to 205 (GGGIVFLLFGVFAIICFISWI). The Cytoplasmic portion of the chain corresponds to 206–227 (PRIPFSAFMLQTSIDVSRKYGH). The chain crosses the membrane as a helical span at residues 228–248 (MFIVSTIGGLVAVAFAAWFSV). The Extracellular segment spans residues 249-275 (TLVSIYVAYEPSSSGSNPSCSDGGCSR). The chain crosses the membrane as a helical span at residues 276–296 (ARVIGLVVYVTFAMYWFSEWL). Topologically, residues 297–333 (KNTIHTTIAGVYGSWYFWSQSPNGMPRGSTRGAFRRA) are cytoplasmic. The helical transmembrane segment at 334–354 (TTYSFGSVSFGSLIIAIINML) threads the bilayer. Residues 355–370 (RQACSVAQRNEAAEGS) are Extracellular-facing. A helical transmembrane segment spans residues 371–391 (IVGSIMFWILGCFIAILDWLV). The Cytoplasmic portion of the chain corresponds to 392-432 (TLFNRYAFCHIALYGKAYIPAAKDTWTMMRDRGIDALVNDC). The helical transmembrane segment at 433-453 (LIGPVLTMGSVFVSYVCALLA) threads the bilayer. Residues 454-469 (YLYLQFTKPSYNADGN) are Extracellular-facing. The N-linked (GlcNAc...) asparagine glycan is linked to Asn-469. Residues 470–490 (FTAVIMAFAFVIGLQICQIFM) traverse the membrane as a helical segment. At 491–537 (TPVSSGIETIFVAMGWDPQVMIRDHPDLYYRMIQVYPRVQQAIQPSA) the chain is on the cytoplasmic side.

It belongs to the CTL (choline transporter-like) family.

It is found in the cell membrane. In terms of biological role, probably involved in transport through the plasma membrane. The sequence is that of Protein pns1 (pns1) from Aspergillus fumigatus (strain ATCC MYA-4609 / CBS 101355 / FGSC A1100 / Af293) (Neosartorya fumigata).